A 380-amino-acid polypeptide reads, in one-letter code: Cytochrome b (380 aa).

Transmembrane regions (helical) follow at residues 33–53 (FGSL…FLAM), 77–98 (WFIR…YLHI), 113–133 (WTIG…GYVL), and 178–198 (FFTF…VHLL). His-83 and His-97 together coordinate heme b. Heme b-binding residues include His-182 and His-196. His-201 lines the a ubiquinone pocket. The next 4 helical transmembrane spans lie at 226–246 (YKDL…ALFS), 288–308 (LGGV…PILH), 320–340 (LTQT…WIGG), and 347–367 (FVII…VLAP).

This sequence belongs to the cytochrome b family. In terms of assembly, the cytochrome bc1 complex contains 3 respiratory subunits (MT-CYB, CYC1 and UQCRFS1), 2 core proteins (UQCRC1 and UQCRC2) and probably 6 low-molecular weight proteins. Heme b is required as a cofactor.

Its subcellular location is the mitochondrion inner membrane. Its function is as follows. Component of the ubiquinol-cytochrome c reductase complex (complex III or cytochrome b-c1 complex) that is part of the mitochondrial respiratory chain. The b-c1 complex mediates electron transfer from ubiquinol to cytochrome c. Contributes to the generation of a proton gradient across the mitochondrial membrane that is then used for ATP synthesis. The sequence is that of Cytochrome b (mt-cyb) from Lampris guttatus (Opah).